A 215-amino-acid chain; its full sequence is Ribose-5-phosphate isomerase A (215 aa).

Residues 26–29 (TGST), 79–82 (DGAD), and 92–95 (KGGG) each bind substrate. The active-site Proton acceptor is glutamate 101. A substrate-binding site is contributed by lysine 119.

The protein belongs to the ribose 5-phosphate isomerase family. In terms of assembly, homodimer.

It carries out the reaction aldehydo-D-ribose 5-phosphate = D-ribulose 5-phosphate. The protein operates within carbohydrate degradation; pentose phosphate pathway; D-ribose 5-phosphate from D-ribulose 5-phosphate (non-oxidative stage): step 1/1. In terms of biological role, catalyzes the reversible conversion of ribose-5-phosphate to ribulose 5-phosphate. This chain is Ribose-5-phosphate isomerase A, found in Stenotrophomonas maltophilia (strain K279a).